The sequence spans 2537 residues: Centrosomal protein of 192 kDa (2537 aa).

2 disordered regions span residues 69 to 138 (FSVP…ATES) and 288 to 308 (HSSE…LPGT). Residues 70-81 (SVPSGSSPGSQS) are compositionally biased toward low complexity. Residues 106-122 (VESQRLSNALSKQSALQ) are compositionally biased toward polar residues. Positions 288 to 298 (HSSETTHKESE) are enriched in basic and acidic residues. S812 is subject to Phosphoserine. Disordered stretches follow at residues 950 to 1021 (VTFE…QQQP), 1043 to 1064 (VSEP…DRKS), 1101 to 1158 (KGTL…WTSN), and 1182 to 1234 (ATSH…STVH). Polar residues predominate over residues 960–970 (PKNSDLKNTSP). Residues 984 to 1005 (FRPSTSPLSHSSPSEISGTSSS) show a composition bias toward low complexity. 2 stretches are compositionally biased toward polar residues: residues 1046–1055 (PESSYPTTAT) and 1103–1112 (TLSSIIQNNS). A compositionally biased stretch (basic and acidic residues) spans 1128 to 1141 (EYVKPDFRWSKDPS). The span at 1142 to 1158 (SKSGNLLETSEVGWTSN) shows a compositional bias: polar residues. Residues 1195 to 1207 (EDQRISPKDKSTA) are compositionally biased toward basic and acidic residues. The span at 1213-1234 (GQVSHQTTSENQCTPIPSSTVH) shows a compositional bias: polar residues. 3 positions are modified to phosphoserine: S1755, S2098, and S2110. Position 2313 is a hydroxyproline (P2313).

In terms of assembly, interacts with SHBG. Interacts with PLK4; this interaction mediates the formation of a ternary complex composed by PLK4, TENT5C and CEP192. Interacts with CCDC66. Hydroxylation by PHD1/EGLN2 at Pro-2313 promotes ubiquitination. In terms of processing, ubiquitinated by a SCF(SKP2) complex following proline hydroxylation. Post-translationally, ubiquitinated in a FBXL13-dependent manner, leading to proteasomal degradation.

It localises to the cytoplasm. The protein localises to the cytoskeleton. Its subcellular location is the microtubule organizing center. The protein resides in the centrosome. It is found in the centriole. In terms of biological role, required for mitotic centrosome maturation and bipolar spindle assembly. Appears to be a major regulator of pericentriolar material (PCM) recruitment, centrosome maturation, and centriole duplication. Centrosome-specific activating scaffold for AURKA and PLK1. This chain is Centrosomal protein of 192 kDa, found in Homo sapiens (Human).